Here is a 130-residue protein sequence, read N- to C-terminus: Cyclin-dependent kinase 4 inhibitor B (130 aa).

ANK repeat units lie at residues 5-34 (GSDA…DPNA), 38-66 (FGRR…EPNC), 71-100 (TLTR…RLDV), and 104-130 (WGRL…ATGD). T12 is subject to Phosphothreonine.

Belongs to the CDKN2 cyclin-dependent kinase inhibitor family. In terms of assembly, heterodimer of CDKN2B with CDK4 or CDK6. In terms of tissue distribution, expression abundant in lung, less abundant in testis, barely detectable in liver, and not detectable in neonatal kidney, adult kidney, brain, heart, or spleen.

Functionally, interacts strongly with CDK4 and CDK6. Potent inhibitor. Potential effector of TGF-beta induced cell cycle arrest. This is Cyclin-dependent kinase 4 inhibitor B (Cdkn2b) from Rattus norvegicus (Rat).